A 399-amino-acid chain; its full sequence is Succinate--CoA ligase [ADP-forming] subunit beta (399 aa).

The region spanning 9–254 is the ATP-grasp domain; that stretch reads KAVLKSFGAP…TTEEDEKEIE (246 aa). Residues Lys46, 53 to 55, Glu109, Ala112, and Glu117 contribute to the ATP site; that span reads GRG. Residues Asn209 and Asp223 each coordinate Mg(2+). Residues Asn274 and 331 to 333 each bind substrate; that span reads GIM.

The protein belongs to the succinate/malate CoA ligase beta subunit family. Heterotetramer of two alpha and two beta subunits. Requires Mg(2+) as cofactor.

It carries out the reaction succinate + ATP + CoA = succinyl-CoA + ADP + phosphate. The enzyme catalyses GTP + succinate + CoA = succinyl-CoA + GDP + phosphate. The protein operates within carbohydrate metabolism; tricarboxylic acid cycle; succinate from succinyl-CoA (ligase route): step 1/1. Its function is as follows. Succinyl-CoA synthetase functions in the citric acid cycle (TCA), coupling the hydrolysis of succinyl-CoA to the synthesis of either ATP or GTP and thus represents the only step of substrate-level phosphorylation in the TCA. The beta subunit provides nucleotide specificity of the enzyme and binds the substrate succinate, while the binding sites for coenzyme A and phosphate are found in the alpha subunit. The protein is Succinate--CoA ligase [ADP-forming] subunit beta of Maricaulis maris (strain MCS10) (Caulobacter maris).